The chain runs to 401 residues: Acetate kinase (401 aa).

Position 7 (N7) interacts with Mg(2+). ATP is bound at residue K14. R92 provides a ligand contact to substrate. D149 functions as the Proton donor/acceptor in the catalytic mechanism. ATP is bound by residues 209 to 213 (HLGNG), 283 to 285 (DAR), and 331 to 335 (GLGEN). E385 contacts Mg(2+).

This sequence belongs to the acetokinase family. In terms of assembly, homodimer. Requires Mg(2+) as cofactor. Mn(2+) serves as cofactor.

The protein resides in the cytoplasm. The enzyme catalyses acetate + ATP = acetyl phosphate + ADP. The protein operates within metabolic intermediate biosynthesis; acetyl-CoA biosynthesis; acetyl-CoA from acetate: step 1/2. Its function is as follows. Catalyzes the formation of acetyl phosphate from acetate and ATP. Can also catalyze the reverse reaction. This is Acetate kinase from Helicobacter pylori (strain Shi470).